Consider the following 1112-residue polypeptide: Electrogenic sodium bicarbonate cotransporter 4 (1112 aa).

Residues 1–13 show a composition bias toward basic and acidic residues; it reads MKVEEKAGVKKLE. Disordered regions lie at residues 1–80, 220–255, and 439–469; these read MKVE…SSLG, KKPIHRSLADIGKSVSTTNRSSARSPSAGPTLHHST, and GRSGASAGGGGSGGGAGGSGAGGGGSGNEAE. The Cytoplasmic segment spans residues 1-513; the sequence is MKVEEKAGVK…DFYDGFHIQS (513 aa). 2 stretches are compositionally biased toward polar residues: residues 53 to 67 and 233 to 244; these read QRVQWSLQPDKSQQD and SVSTTNRSSARS. Residues 444-465 are compositionally biased toward gly residues; that stretch reads SAGGGGSGGGAGGSGAGGGGSG. Residues 514 to 536 form a helical membrane-spanning segment; it reads ISAVLFIYLGCITNAITFGGLLG. Residues 537–547 are Extracellular-facing; sequence DATDNYQGVME. A helical transmembrane segment spans residues 548–579; that stretch reads SFLGTAMAGSLFCLFSGQPLIILSSTGPILIF. Residues 580–598 are Cytoplasmic-facing; that stretch reads EKLLFDFSKANGLDYMEFR. The chain crosses the membrane as a helical span at residues 599 to 620; the sequence is LWIGLHSAIQCLILVATDASFI. At 621-734 the chain is on the extracellular side; it reads IKYITRFTEE…LGSSCQFVPD (114 aa). Residues 735–753 traverse the membrane as a helical segment; the sequence is LALMSFILFFGTYSMTLTL. Topologically, residues 754-772 are cytoplasmic; sequence KKFKFSRYFPTKVRTLVAD. A helical transmembrane segment spans residues 773–792; it reads FSIVFSILLFCGIDACFGLQ. Residues 793-820 are Extracellular-facing; sequence TPKLHVPNVIKPTRPDRGWFVAPFGKNP. A helical membrane pass occupies residues 821 to 839; the sequence is WWVYPASILPALLVTILIF. At 840 to 858 the chain is on the cytoplasmic side; that stretch reads MDQQITAVIVNRKENKLRK. The helical transmembrane segment at 859-875 threads the bilayer; sequence AAGYHLDLFWVGILMAL. Topologically, residues 876–880 are extracellular; that stretch reads CSFMG. A helical membrane pass occupies residues 881–900; that stretch reads LPWYVAATVISIAHIDSLKM. At 901–920 the chain is on the cytoplasmic side; it reads ETETSAPGEQPQFLGVREQR. A helical membrane pass occupies residues 921 to 940; sequence VTGVMVFILTGISVFLAPIL. The Extracellular segment spans residues 941-945; sequence KYIPM. The helical transmembrane segment at 946 to 966 threads the bilayer; sequence PVLYGVFLYMGVASLNGIQFW. Residues 967–992 lie on the Cytoplasmic side of the membrane; sequence DRCKLFLMPAKHQPDHAFLRHVPLRR. A helical transmembrane segment spans residues 993-1010; sequence IHLFTLVQILCLALLWIL. Over 1011-1015 the chain is Extracellular; that stretch reads KSTMA. Residues 1016–1033 traverse the membrane as a helical segment; that stretch reads AIIFPVMILGLIIVRRLL. Topologically, residues 1034–1112 are cytoplasmic; that stretch reads DLIFSQHDLA…KRSSSWSHSL (79 aa). Basic and acidic residues predominate over residues 1055 to 1074; sequence KESDRKKRRKEVHENTDKEP. Positions 1055–1112 are disordered; sequence KESDRKKRRKEVHENTDKEPQFLPPSVVKIPMEGIPSDPQNGIHCVGRKRSSSWSHSL.

The protein belongs to the anion exchanger (TC 2.A.31) family. As to expression, observed in hepatocytes and in the apical region of bile duct intrahepatic cholangiocytes of liver. Also observed in uroepithelium cells lining the outer pelvic wall of the kidney (at protein level). Highly expressed in colon, distal colon, liver, kidney and testis. Moderate expression in duodenum and stomach and weak expression in heart. In kidney, very weakly expressed in the inner medulla, but abundantly expressed in cortex and outer medulla in the medullary thick ascending and cortical thick ascending limbs of the loop of Henle.

The protein resides in the basolateral cell membrane. Its subcellular location is the apical cell membrane. It carries out the reaction 2 hydrogencarbonate(out) + Na(+)(out) = 2 hydrogencarbonate(in) + Na(+)(in). The catalysed reaction is 3 hydrogencarbonate(out) + Na(+)(out) = 3 hydrogencarbonate(in) + Na(+)(in). Functionally, mediates sodium- and bicarbonate-dependent electrogenic sodium bicarbonate cotransport, with a Na(+):HCO3(-) stoichiometry varying from 1:2 to 1:3. This chain is Electrogenic sodium bicarbonate cotransporter 4, found in Rattus norvegicus (Rat).